Here is a 49-residue protein sequence, read N- to C-terminus: Small, acid-soluble spore protein O (49 aa).

The disordered stretch occupies residues 23 to 49 (AGYNEKFSNEPLTEAQRQNNKKRKKNQ).

It belongs to the SspO family.

The protein localises to the spore core. This is Small, acid-soluble spore protein O from Geobacillus thermodenitrificans (strain NG80-2).